The following is an 84-amino-acid chain: U1-theraphotoxin-Hs1a (84 aa).

An N-terminal signal peptide occupies residues 1–22 (MKVTLIAILTCAAVLVLHTTAA). Residues 23 to 48 (EELEESQLMEVGMPDTELAAVDEERL) constitute a propeptide that is removed on maturation. 3 disulfide bridges follow: C51–C65, C55–C76, and C70–C81.

This sequence belongs to the neurotoxin 12 (Hwtx-2) family. 02 (Hwtx-2) subfamily. Expressed by the venom gland.

It localises to the secreted. Blocks neuromuscular transmission. Acts cooperatively to potentiate the activity of huwentoxin-I. Paralyzes locusts and kills mice following intracerebroventricular injection. This Cyriopagopus schmidti (Chinese bird spider) protein is U1-theraphotoxin-Hs1a.